Reading from the N-terminus, the 88-residue chain is Elongation factor 1-beta (88 aa).

Belongs to the EF-1-beta/EF-1-delta family.

Its function is as follows. Promotes the exchange of GDP for GTP in EF-1-alpha/GDP, thus allowing the regeneration of EF-1-alpha/GTP that could then be used to form the ternary complex EF-1-alpha/GTP/AAtRNA. The chain is Elongation factor 1-beta (ef1b) from Archaeoglobus fulgidus (strain ATCC 49558 / DSM 4304 / JCM 9628 / NBRC 100126 / VC-16).